A 483-amino-acid polypeptide reads, in one-letter code: Glycogen synthase (483 aa).

An ADP-alpha-D-glucose-binding site is contributed by Lys15.

It belongs to the glycosyltransferase 1 family. Bacterial/plant glycogen synthase subfamily.

The catalysed reaction is [(1-&gt;4)-alpha-D-glucosyl](n) + ADP-alpha-D-glucose = [(1-&gt;4)-alpha-D-glucosyl](n+1) + ADP + H(+). The protein operates within glycan biosynthesis; glycogen biosynthesis. Its function is as follows. Synthesizes alpha-1,4-glucan chains using ADP-glucose. This chain is Glycogen synthase, found in Desulfatibacillum aliphaticivorans.